We begin with the raw amino-acid sequence, 330 residues long: Glycerol-3-phosphate dehydrogenase [NAD(P)+] (330 aa).

Residues tryptophan 11, arginine 33, and lysine 105 each contribute to the NADPH site. Lysine 105, glycine 133, and serine 135 together coordinate sn-glycerol 3-phosphate. Alanine 137 contributes to the NADPH binding site. The sn-glycerol 3-phosphate site is built by lysine 188, aspartate 241, serine 251, arginine 252, and asparagine 253. Residue lysine 188 is the Proton acceptor of the active site. Arginine 252 provides a ligand contact to NADPH. NADPH is bound by residues valine 276 and glutamate 278.

Belongs to the NAD-dependent glycerol-3-phosphate dehydrogenase family.

The protein localises to the cytoplasm. The catalysed reaction is sn-glycerol 3-phosphate + NAD(+) = dihydroxyacetone phosphate + NADH + H(+). The enzyme catalyses sn-glycerol 3-phosphate + NADP(+) = dihydroxyacetone phosphate + NADPH + H(+). It functions in the pathway membrane lipid metabolism; glycerophospholipid metabolism. Its function is as follows. Catalyzes the reduction of the glycolytic intermediate dihydroxyacetone phosphate (DHAP) to sn-glycerol 3-phosphate (G3P), the key precursor for phospholipid synthesis. This Acidovorax ebreus (strain TPSY) (Diaphorobacter sp. (strain TPSY)) protein is Glycerol-3-phosphate dehydrogenase [NAD(P)+].